We begin with the raw amino-acid sequence, 671 residues long: Annexin A6 (671 aa).

8 Annexin repeats span residues 18 to 89 (FNAS…SLMR), 90 to 161 (PPAY…VLLQ), 173 to 245 (DLVE…AVVK), 249 to 320 (STAE…KLCE), 361 to 432 (FNDD…GLML), 433 to 504 (TPAQ…SLAL), 519 to 594 (EDAK…AIVR), and 598 to 669 (NKPA…LCGG).

It belongs to the annexin family.

It is found in the cytoplasm. Its subcellular location is the melanosome. May associate with CD21. May regulate the release of Ca(2+) from intracellular stores. This chain is Annexin A6 (ANXA6), found in Gallus gallus (Chicken).